We begin with the raw amino-acid sequence, 563 residues long: Benzaldehyde lyase (563 aa).

The protein belongs to the TPP enzyme family. A metal cation serves as cofactor. Requires thiamine diphosphate as cofactor.

The catalysed reaction is benzoin = 2 benzaldehyde. Its function is as follows. Cleavage of benzoin-anisoin acyloin linkage. In Pseudomonas fluorescens, this protein is Benzaldehyde lyase (bznB).